A 188-amino-acid polypeptide reads, in one-letter code: Peptidyl-tRNA hydrolase (188 aa).

Residue Tyr14 participates in tRNA binding. The active-site Proton acceptor is His19. The tRNA site is built by Tyr64, Asn66, and Asn112.

It belongs to the PTH family. In terms of assembly, monomer.

The protein localises to the cytoplasm. It catalyses the reaction an N-acyl-L-alpha-aminoacyl-tRNA + H2O = an N-acyl-L-amino acid + a tRNA + H(+). Hydrolyzes ribosome-free peptidyl-tRNAs (with 1 or more amino acids incorporated), which drop off the ribosome during protein synthesis, or as a result of ribosome stalling. In terms of biological role, catalyzes the release of premature peptidyl moieties from peptidyl-tRNA molecules trapped in stalled 50S ribosomal subunits, and thus maintains levels of free tRNAs and 50S ribosomes. The protein is Peptidyl-tRNA hydrolase of Clostridium perfringens (strain ATCC 13124 / DSM 756 / JCM 1290 / NCIMB 6125 / NCTC 8237 / Type A).